Reading from the N-terminus, the 93-residue chain is Stromal cell-derived factor 1 (93 aa).

The first 21 residues, 1–21 (MNAKVVVVLVLVLTALCLSDG), serve as a signal peptide directing secretion. The Receptor activation motif signature appears at 22 to 23 (KP). A receptor and heparin binding region spans residues 29–33 (RCPCR). Intrachain disulfides connect C30–C55 and C32–C71. 3 receptor binding regions span residues 39 to 41 (VAR), 48 to 50 (KIL), and 60 to 70 (VARLKNNNRQV). Heparin contacts are provided by residues 41–51 (RANVKHLKILN), R62, Q69, and K85.

It belongs to the intercrine alpha (chemokine CxC) family. In terms of assembly, monomer or homodimer; in equilibrium. Dimer formation is induced by non acidic pH and the presence of multivalent anions, and by binding to CXCR4 or heparin. Monomeric form is required for full chemotactic activity and resistance to ischemia/reperfusion injury, whereas the dimeric form acts as a partial agonist of CXCR4, stimulating Ca2+ mobilization but with no chemotactic activity and instead acts as a selective antagonist that blocks chemotaxis induced by the monomeric form. Interacts with the N-terminus of ACKR3. Interacts with integrin subunit ITGB3 (via the allosteric site (site 2)). Interacts with TNFAIP6 (via Link domain). As to quaternary structure, (Microbial infection) Interacts with molluscum contagiosum virus protein MC148. Post-translationally, processed forms SDF-1-beta(3-72) and SDF-1-alpha(3-67) are produced after secretion by proteolytic cleavage of isoforms Beta and Alpha, respectively. The N-terminal processing is probably achieved by DPP4. Isoform Alpha is first cleaved at the C-terminus to yield a SDF-1-alpha(1-67) intermediate before being processed at the N-terminus. The C-terminal processing of isoform Alpha is reduced by binding to heparin and, probably, cell surface proteoglycans. In terms of tissue distribution, isoform Alpha and isoform Beta are ubiquitously expressed, with highest levels detected in liver, pancreas and spleen. Isoform Gamma is mainly expressed in heart, with weak expression detected in several other tissues. Isoform Delta, isoform Epsilon and isoform Theta have highest expression levels in pancreas, with lower levels detected in heart, kidney, liver and spleen.

The protein resides in the secreted. Chemoattractant active on T-lymphocytes and monocytes but not neutrophils. Activates the C-X-C chemokine receptor CXCR4 to induce a rapid and transient rise in the level of intracellular calcium ions and chemotaxis. SDF-1-beta(3-72) and SDF-1-alpha(3-67) show a reduced chemotactic activity. Binding to cell surface proteoglycans seems to inhibit formation of SDF-1-alpha(3-67) and thus to preserve activity on local sites. Also binds to atypical chemokine receptor ACKR3, which activates the beta-arrestin pathway and acts as a scavenger receptor for SDF-1. Binds to the allosteric site (site 2) of integrins and activates integrins ITGAV:ITGB3, ITGA4:ITGB1 and ITGA5:ITGB1 in a CXCR4-independent manner. Acts as a positive regulator of monocyte migration and a negative regulator of monocyte adhesion via the LYN kinase. Stimulates migration of monocytes and T-lymphocytes through its receptors, CXCR4 and ACKR3, and decreases monocyte adherence to surfaces coated with ICAM-1, a ligand for beta-2 integrins. SDF1A/CXCR4 signaling axis inhibits beta-2 integrin LFA-1 mediated adhesion of monocytes to ICAM-1 through LYN kinase. Inhibits CXCR4-mediated infection by T-cell line-adapted HIV-1. Plays a protective role after myocardial infarction. Induces down-regulation and internalization of ACKR3 expressed in various cells. Has several critical functions during embryonic development; required for B-cell lymphopoiesis, myelopoiesis in bone marrow and heart ventricular septum formation. Stimulates the proliferation of bone marrow-derived B-cell progenitors in the presence of IL7 as well as growth of stromal cell-dependent pre-B-cells. The chain is Stromal cell-derived factor 1 (CXCL12) from Homo sapiens (Human).